The following is a 697-amino-acid chain: Long-chain-fatty-acid--CoA ligase 6 (697 aa).

The helical; Signal-anchor for type III membrane protein transmembrane segment at 25-45 (LSATTLVSVGALAAVLAYWLT) threads the bilayer. Topologically, residues 46–697 (HRPKALQPPC…QIEELYLVSV (652 aa)) are cytoplasmic.

This sequence belongs to the ATP-dependent AMP-binding enzyme family. Mg(2+) is required as a cofactor.

The protein resides in the mitochondrion outer membrane. It is found in the peroxisome membrane. The protein localises to the microsome membrane. It localises to the endoplasmic reticulum membrane. It carries out the reaction a long-chain fatty acid + ATP + CoA = a long-chain fatty acyl-CoA + AMP + diphosphate. It catalyses the reaction (5Z,8Z,11Z,14Z)-eicosatetraenoate + ATP + CoA = (5Z,8Z,11Z,14Z)-eicosatetraenoyl-CoA + AMP + diphosphate. The enzyme catalyses 15-hydroxy-(5Z,8Z,11Z,13E)-eicosatetraenoate + ATP + CoA = 15-hydroxy-(5Z,8Z,11Z,13E)-eicosatetraenoyl-CoA + AMP + diphosphate. The catalysed reaction is 12-hydroxy-(5Z,8Z,10E,14Z)-eicosatetraenoate + ATP + CoA = 12-hydroxy-(5Z,8Z,10E,14Z)-eicosatetraenoyl-CoA + AMP + diphosphate. It carries out the reaction 5-hydroxy-(6E,8Z,11Z,14Z)-eicosatetraenoate + ATP + CoA = 5-hydroxy-(6E,8Z,11Z,14Z)-eicosatetraenoyl-CoA + AMP + diphosphate. It catalyses the reaction hexadecanoate + ATP + CoA = hexadecanoyl-CoA + AMP + diphosphate. The enzyme catalyses (E)-hexadec-2-enoate + ATP + CoA = (2E)-hexadecenoyl-CoA + AMP + diphosphate. Catalyzes the conversion of long-chain fatty acids to their active form acyl-CoA for both synthesis of cellular lipids, and degradation via beta-oxidation. Plays an important role in fatty acid metabolism in brain and the acyl-CoAs produced may be utilized exclusively for the synthesis of the brain lipid. This chain is Long-chain-fatty-acid--CoA ligase 6 (Acsl6), found in Mus musculus (Mouse).